A 794-amino-acid polypeptide reads, in one-letter code: MAGWIQAQQLQGDALRQMQVLYGQHFPIEVRHYLAQWIESQPWDAIDLDNPQDRAQATQLLEGLVQELQKKAEHQVGEDGFLLKIKLGHYATQLQNTYDRCPMELVRCIRHILYNEQRLVREANNGSSSAGILVDAMSQKHLQINQTFEELRLVTQDTENELKKLQQTQEYFIIQYQESLRIQAQFAQLAQLNPQERLSRETALQQKQVSLEAWLQREAQTLQQYRVELAEKHQKTLQLLRKQQTIILDDELIQWKRRQQLAGNGGPPEGSLDVLQSWCEKLAEIIWQNRQQIRRAEHLCQQLPIPGPVEEMLAEVNATITDIISALVTSTFIIEKQPPQVLKTQTKFAATVRLLVGGKLNVHMNPPQVKATIISEQQAKSLLKNENTRNECSGEILNNCCVMEYHQATGTLSAHFRNMSLKRIKRADRRGAESVTEEKFTVLFESQFSVGSNELVFQVKTLSLPVVVIVHGSQDHNATATVLWDNAFAEPGRVPFAVPDKVLWPQLCEALNMKFKAEVQSNRGLTKENLVFLAQKLFNSSSSHLEDYNGMSVSWSQFNRENLPGWNYTFWQWFDGVMEVLKKHHKPHWNDGAILGFVNKQQAHDLLINKPDGTFLLRFSDSEIGGITIAWKFDSPDRNLWNLKPFTTRDFSIRSLADRLGDLNYLIYVFPDRPKDEVFSKYYTPVLAKAVDGYVKPQIKQVVPEFVSASADSAGSNATYMDQAPSPAVCPQPHYNMYPQNPDPVLDQDGEFDLDETMDVARHVEELLRRPMDSLEPSLPPPTGLFTPGRGSLS.

Phosphotyrosine is present on tyrosine 90. Serine 128 is subject to Phosphoserine. The SH2 domain maps to 589–686; the sequence is WNDGAILGFV…EVFSKYYTPV (98 aa). Position 682 is a phosphotyrosine (tyrosine 682). Position 694 is a phosphotyrosine; by JAK2 (tyrosine 694). The interval 771-794 is disordered; that stretch reads PMDSLEPSLPPPTGLFTPGRGSLS.

The protein belongs to the transcription factor STAT family. Forms a homodimer or a heterodimer with a related family member. Binds NR3C1. Interacts with NCOA1 and SOCS7. Interacts with ERBB4. Interacts with EBF4. Interacts with CD69. ISGylated. Post-translationally, tyrosine phosphorylated in response to KITLG/SCF, IL2, IL3, IL7, IL15, CSF2/GMCSF, GH1, PRL, EPO and THPO. Activated KIT promotes phosphorylation on tyrosine residues and subsequent translocation to the nucleus. Tyrosine phosphorylated in response to constitutively activated FGFR1, FGFR2, FGFR3 and FGFR4. Tyrosine phosphorylation is required for DNA-binding activity and dimerization. Serine phosphorylation is also required for maximal transcriptional activity. Tyrosine phosphorylated in response to signaling via activated FLT3; wild-type FLT3 results in much weaker phosphorylation than constitutively activated mutant FLT3. Alternatively, can be phosphorylated by JAK2 at Tyr-694.

It localises to the cytoplasm. Its subcellular location is the nucleus. Its function is as follows. Carries out a dual function: signal transduction and activation of transcription. Mediates cellular responses to the cytokine KITLG/SCF and other growth factors. May mediate cellular responses to activated FGFR1, FGFR2, FGFR3 and FGFR4. Binds to the GAS element and activates PRL-induced transcription. Regulates the expression of milk proteins during lactation. The sequence is that of Signal transducer and activator of transcription 5A (STAT5A) from Bos taurus (Bovine).